A 1404-amino-acid chain; its full sequence is DNA-directed RNA polymerase subunit beta' (1404 aa).

Zn(2+)-binding residues include C70, C72, C85, and C88. D460, D462, and D464 together coordinate Mg(2+). 4 residues coordinate Zn(2+): C814, C888, C895, and C898.

The protein belongs to the RNA polymerase beta' chain family. The RNAP catalytic core consists of 2 alpha, 1 beta, 1 beta' and 1 omega subunit. When a sigma factor is associated with the core the holoenzyme is formed, which can initiate transcription. Requires Mg(2+) as cofactor. Zn(2+) is required as a cofactor.

The enzyme catalyses RNA(n) + a ribonucleoside 5'-triphosphate = RNA(n+1) + diphosphate. Its function is as follows. DNA-dependent RNA polymerase catalyzes the transcription of DNA into RNA using the four ribonucleoside triphosphates as substrates. In Buchnera aphidicola subsp. Baizongia pistaciae (strain Bp), this protein is DNA-directed RNA polymerase subunit beta'.